Consider the following 351-residue polypeptide: Transmembrane protein DDB_G0272716 (351 aa).

Residues Asn4 and Asn59 are each glycosylated (N-linked (GlcNAc...) asparagine). 2 consecutive transmembrane segments (helical) span residues 175–195 (FSSL…TAIG) and 215–235 (VVAP…GAFI). A glycan (N-linked (GlcNAc...) asparagine) is linked at Asn345.

The protein resides in the membrane. In Dictyostelium discoideum (Social amoeba), this protein is Transmembrane protein DDB_G0272716.